Here is a 409-residue protein sequence, read N- to C-terminus: Tryptophan synthase beta chain (409 aa).

Lysine 100 bears the N6-(pyridoxal phosphate)lysine mark.

Belongs to the TrpB family. As to quaternary structure, tetramer of two alpha and two beta chains. The cofactor is pyridoxal 5'-phosphate.

It carries out the reaction (1S,2R)-1-C-(indol-3-yl)glycerol 3-phosphate + L-serine = D-glyceraldehyde 3-phosphate + L-tryptophan + H2O. It participates in amino-acid biosynthesis; L-tryptophan biosynthesis; L-tryptophan from chorismate: step 5/5. The beta subunit is responsible for the synthesis of L-tryptophan from indole and L-serine. The chain is Tryptophan synthase beta chain from Pyrobaculum arsenaticum (strain DSM 13514 / JCM 11321 / PZ6).